Here is a 136-residue protein sequence, read N- to C-terminus: Large ribosomal subunit protein eL27 (136 aa).

Residues 5-40 (MKPGKVVLVLAGRYSGRKAVIVKNIDDGTSDRPYSH) form the KOW domain. Lysine 27 and lysine 93 each carry N6-acetyllysine.

The protein belongs to the eukaryotic ribosomal protein eL27 family. As to quaternary structure, component of the large ribosomal subunit. Interacts with RRP1B. Component of the large ribosomal subunit. Interacts with RRP1B. Interacts with DHX33.

It localises to the cytoplasm. The protein localises to the cytosol. The protein resides in the rough endoplasmic reticulum. Component of the large ribosomal subunit. Required for proper rRNA processing and maturation of 28S and 5.8S rRNAs. The chain is Large ribosomal subunit protein eL27 (RPL27) from Bos taurus (Bovine).